A 313-amino-acid chain; its full sequence is Ribosomal RNA small subunit methyltransferase H (313 aa).

S-adenosyl-L-methionine contacts are provided by residues 35–37, aspartate 55, phenylalanine 79, aspartate 100, and glutamine 107; that span reads GGH.

This sequence belongs to the methyltransferase superfamily. RsmH family.

Its subcellular location is the cytoplasm. It carries out the reaction cytidine(1402) in 16S rRNA + S-adenosyl-L-methionine = N(4)-methylcytidine(1402) in 16S rRNA + S-adenosyl-L-homocysteine + H(+). In terms of biological role, specifically methylates the N4 position of cytidine in position 1402 (C1402) of 16S rRNA. This Burkholderia vietnamiensis (strain G4 / LMG 22486) (Burkholderia cepacia (strain R1808)) protein is Ribosomal RNA small subunit methyltransferase H.